The chain runs to 70 residues: Small ribosomal subunit protein bS21 (70 aa).

Belongs to the bacterial ribosomal protein bS21 family.

This is Small ribosomal subunit protein bS21 from Methylibium petroleiphilum (strain ATCC BAA-1232 / LMG 22953 / PM1).